A 554-amino-acid polypeptide reads, in one-letter code: Aspartyl/glutamyl-tRNA(Asn/Gln) amidotransferase subunit B (554 aa).

The segment at 491–554 (AEQPTAPPPE…TPVSHQDAHA (64 aa)) is disordered. Low complexity predominate over residues 502 to 540 (ESAAETPEAPPAVEDAPPEAPTEAITAEAGSAEAITAAS).

Belongs to the GatB/GatE family. GatB subfamily. As to quaternary structure, heterotrimer of A, B and C subunits.

The catalysed reaction is L-glutamyl-tRNA(Gln) + L-glutamine + ATP + H2O = L-glutaminyl-tRNA(Gln) + L-glutamate + ADP + phosphate + H(+). It catalyses the reaction L-aspartyl-tRNA(Asn) + L-glutamine + ATP + H2O = L-asparaginyl-tRNA(Asn) + L-glutamate + ADP + phosphate + 2 H(+). Its function is as follows. Allows the formation of correctly charged Asn-tRNA(Asn) or Gln-tRNA(Gln) through the transamidation of misacylated Asp-tRNA(Asn) or Glu-tRNA(Gln) in organisms which lack either or both of asparaginyl-tRNA or glutaminyl-tRNA synthetases. The reaction takes place in the presence of glutamine and ATP through an activated phospho-Asp-tRNA(Asn) or phospho-Glu-tRNA(Gln). This is Aspartyl/glutamyl-tRNA(Asn/Gln) amidotransferase subunit B from Gloeobacter violaceus (strain ATCC 29082 / PCC 7421).